Here is a 24-residue protein sequence, read N- to C-terminus: Acetylcholine receptor subunit alpha (24 aa).

This sequence belongs to the ligand-gated ion channel (TC 1.A.9) family. Acetylcholine receptor (TC 1.A.9.1) subfamily. Alpha-1/CHRNA1 sub-subfamily. One of the alpha chains that assemble within the acetylcholine receptor, a pentamer of two alpha chains, a beta, a delta, and a gamma or epsilon chains.

The protein resides in the postsynaptic cell membrane. The protein localises to the cell membrane. The catalysed reaction is K(+)(in) = K(+)(out). It catalyses the reaction Na(+)(in) = Na(+)(out). Upon acetylcholine binding, the AChR responds by an extensive change in conformation that affects all subunits and leads to opening of an ion-conducting channel across the plasma membrane. This Electrophorus electricus (Electric eel) protein is Acetylcholine receptor subunit alpha (chrna1).